The primary structure comprises 226 residues: Glutathione S-transferase-like protein gedE (226 aa).

Residues 4–85 (LLPIKVWGQG…YLVERYDTAH (82 aa)) enclose the GST N-terminal domain. The 135-residue stretch at 92–226 (DTNDAQHARQ…VLSAVMPPPS (135 aa)) folds into the GST C-terminal domain.

This sequence belongs to the GST superfamily.

It functions in the pathway secondary metabolite biosynthesis. In terms of biological role, glutathione S-transferase-like protein; part of the gene cluster that mediates the biosynthesis of geodin, an intermediate in the biosynthesis of other natural products. The pathway begins with the synthesis of atrochrysone thioester by the polyketide synthase (PKS) gedC. The atrochrysone carboxyl ACP thioesterase gedB then breaks the thioester bond and releases the atrochrysone carboxylic acid from gedC. The atrochrysone carboxylic acid is then converted to atrochrysone which is further transformed into emodinanthrone. The next step is performed by the emodinanthrone oxygenase gedH that catalyzes the oxidation of emodinanthrone to emodin. Emodin O-methyltransferase encoded probably by gedA then catalyzes methylation of the 8-hydroxy group of emodin to form questin. Ring cleavage of questin by questin oxidase gedK leads to desmethylsulochrin via several intermediates including questin epoxide. Another methylation step probably catalyzed by methyltransferase gedG leads to the formation of sulochrin which is further converted to dihydrogeodin by the sulochrin halogenase gedL. Finally, the dihydrogeodin oxidase gedJ catalyzes the stereospecific phenol oxidative coupling reaction converting dihydrogeodin to geodin. The protein is Glutathione S-transferase-like protein gedE of Aspergillus terreus (strain NIH 2624 / FGSC A1156).